Consider the following 130-residue polypeptide: Small ribosomal subunit protein uS11c (130 aa).

Belongs to the universal ribosomal protein uS11 family. Part of the 30S ribosomal subunit.

It is found in the plastid. The protein localises to the chloroplast. The polypeptide is Small ribosomal subunit protein uS11c (Mesostigma viride (Green alga)).